The primary structure comprises 261 residues: Na(+)-translocating NADH-quinone reductase subunit C (261 aa).

Residues 12–32 (LGVVIGLSLVCSIIVSTAAVG) traverse the membrane as a helical segment. An FMN phosphoryl threonine modification is found at threonine 229.

This sequence belongs to the NqrC family. As to quaternary structure, composed of six subunits; NqrA, NqrB, NqrC, NqrD, NqrE and NqrF. FMN is required as a cofactor.

The protein resides in the cell inner membrane. It catalyses the reaction a ubiquinone + n Na(+)(in) + NADH + H(+) = a ubiquinol + n Na(+)(out) + NAD(+). In terms of biological role, NQR complex catalyzes the reduction of ubiquinone-1 to ubiquinol by two successive reactions, coupled with the transport of Na(+) ions from the cytoplasm to the periplasm. NqrA to NqrE are probably involved in the second step, the conversion of ubisemiquinone to ubiquinol. This chain is Na(+)-translocating NADH-quinone reductase subunit C, found in Vibrio parahaemolyticus serotype O3:K6 (strain RIMD 2210633).